Here is a 308-residue protein sequence, read N- to C-terminus: Oxygen-dependent coproporphyrinogen-III oxidase (308 aa).

Position 100 (S100) interacts with substrate. 2 residues coordinate a divalent metal cation: H104 and H114. The active-site Proton donor is the H114. A substrate-binding site is contributed by 116–118 (NFR). Residues H153 and H183 each contribute to the a divalent metal cation site. The segment at 248–283 (YVEFNLVFDRGTIFGLQSGGRTESILSSMPPMATWK) is important for dimerization. 266-268 (GGR) contributes to the substrate binding site.

The protein belongs to the aerobic coproporphyrinogen-III oxidase family. As to quaternary structure, homodimer. Requires a divalent metal cation as cofactor.

It localises to the cytoplasm. It catalyses the reaction coproporphyrinogen III + O2 + 2 H(+) = protoporphyrinogen IX + 2 CO2 + 2 H2O. It functions in the pathway porphyrin-containing compound metabolism; protoporphyrin-IX biosynthesis; protoporphyrinogen-IX from coproporphyrinogen-III (O2 route): step 1/1. Involved in the heme biosynthesis. Catalyzes the aerobic oxidative decarboxylation of propionate groups of rings A and B of coproporphyrinogen-III to yield the vinyl groups in protoporphyrinogen-IX. The protein is Oxygen-dependent coproporphyrinogen-III oxidase of Francisella tularensis subsp. holarctica (strain FTNF002-00 / FTA).